A 182-amino-acid polypeptide reads, in one-letter code: Large ribosomal subunit protein uL16 (182 aa).

The protein belongs to the universal ribosomal protein uL16 family.

This Thermococcus gammatolerans (strain DSM 15229 / JCM 11827 / EJ3) protein is Large ribosomal subunit protein uL16.